The primary structure comprises 512 residues: Histidine ammonia-lyase (512 aa).

Residues 141 to 143 (ASG) constitute a cross-link (5-imidazolinone (Ala-Gly)). A 2,3-didehydroalanine (Ser) modification is found at S142.

It belongs to the PAL/histidase family. In terms of processing, contains an active site 4-methylidene-imidazol-5-one (MIO), which is formed autocatalytically by cyclization and dehydration of residues Ala-Ser-Gly.

It is found in the cytoplasm. It catalyses the reaction L-histidine = trans-urocanate + NH4(+). Its pathway is amino-acid degradation; L-histidine degradation into L-glutamate; N-formimidoyl-L-glutamate from L-histidine: step 1/3. This Bacillus velezensis (strain DSM 23117 / BGSC 10A6 / LMG 26770 / FZB42) (Bacillus amyloliquefaciens subsp. plantarum) protein is Histidine ammonia-lyase.